A 1091-amino-acid chain; its full sequence is Error-prone DNA polymerase (1091 aa).

The interval 1-51 is disordered; it reads MGWSNGPPSWAEMERVLNGKPRHAGVPAFDADGDVPRSRKRGAYQPPGRER.

It belongs to the DNA polymerase type-C family. DnaE2 subfamily.

Its subcellular location is the cytoplasm. The catalysed reaction is DNA(n) + a 2'-deoxyribonucleoside 5'-triphosphate = DNA(n+1) + diphosphate. In terms of biological role, DNA polymerase involved in damage-induced mutagenesis and translesion synthesis (TLS). It is not the major replicative DNA polymerase. This is Error-prone DNA polymerase from Mycobacterium bovis (strain ATCC BAA-935 / AF2122/97).